The chain runs to 402 residues: Sulfate adenylyltransferase (402 aa).

Belongs to the sulfate adenylyltransferase family.

It carries out the reaction sulfate + ATP + H(+) = adenosine 5'-phosphosulfate + diphosphate. It functions in the pathway sulfur metabolism; hydrogen sulfide biosynthesis; sulfite from sulfate: step 1/3. This is Sulfate adenylyltransferase from Vesicomyosocius okutanii subsp. Calyptogena okutanii (strain HA).